Here is a 394-residue protein sequence, read N- to C-terminus: Enoyl-[acyl-carrier-protein] reductase [NADH] (394 aa).

NAD(+)-binding positions include 48–53 (GASTGY), 74–75 (YE), 111–112 (DA), and 139–140 (LA). Substrate is bound at residue Tyr225. The active-site Proton donor is Tyr235. NAD(+) is bound by residues Lys244 and 273–275 (LVT).

Belongs to the TER reductase family. As to quaternary structure, monomer.

The catalysed reaction is a 2,3-saturated acyl-[ACP] + NAD(+) = a (2E)-enoyl-[ACP] + NADH + H(+). Its pathway is lipid metabolism; fatty acid biosynthesis. Involved in the final reduction of the elongation cycle of fatty acid synthesis (FAS II). Catalyzes the reduction of a carbon-carbon double bond in an enoyl moiety that is covalently linked to an acyl carrier protein (ACP). This is Enoyl-[acyl-carrier-protein] reductase [NADH] from Opitutus terrae (strain DSM 11246 / JCM 15787 / PB90-1).